The primary structure comprises 395 residues: Elongation factor Tu (395 aa).

The region spanning 10–205 (KPHVNIGTIG…VDNWIPIPPR (196 aa)) is the tr-type G domain. The interval 19-26 (GHVDHGKT) is G1. 19–26 (GHVDHGKT) serves as a coordination point for GTP. Threonine 26 serves as a coordination point for Mg(2+). A G2 region spans residues 60 to 64 (GITIN). Positions 81–84 (DCPG) are G3. Residues 81–85 (DCPGH) and 136–139 (NKVD) each bind GTP. The tract at residues 136–139 (NKVD) is G4. Residues 174–176 (SAL) are G5.

Belongs to the TRAFAC class translation factor GTPase superfamily. Classic translation factor GTPase family. EF-Tu/EF-1A subfamily. Monomer.

It localises to the cytoplasm. The enzyme catalyses GTP + H2O = GDP + phosphate + H(+). Its function is as follows. GTP hydrolase that promotes the GTP-dependent binding of aminoacyl-tRNA to the A-site of ribosomes during protein biosynthesis. The chain is Elongation factor Tu from Hymenobacter ocellatus (Parahymenobacter ocellatus).